The following is a 933-amino-acid chain: MKLKETLNLGKIAFPMRADLPNKEPQWQAAWEQAELYKKRQELNAGKPAFHLHDGPPYANGNIHVGHALNKISKDIIVRSKSMSGFQAPYVPGWDTHGLPIEQVLAKQGIKRKEMNLAEYLEMCRQYALSQVDKQRDDFKRLGVSADWENPYVTLDPQFEADQIRVFGAMAEKGYIYRGAKPVYWSWSSESALAEAEIEYHDIDSTSLYYANKVKDGKGILDTNTYIVVWTTTPFTVTASRGLTVGPDMDYLVVKPAGSDRQYVVAEGLLDSLAGKFGWESFETLASHKGADLEYIVTEHPWDTDVEELVILGDHVTLESGTGIVHTAPGFGEDDYNVGTKYKLEVAVTVDERGLMMENAGPDFHGQFYNKVTPIVIDKLGDLLLAQEVINHSYPFDWRTKKPIIWRAVPQWFASVSDFRQDILDEIEKTTFHPSWGETRLYNMIRDRGDWVISRQRAWGVPLPIFYAEDGTAIMTKEVTDHVADLFQENGSIIWWQKEAKDLLPEGFTHPGSPNGEFTKETDIMDVWFDSGSSWNGVMNARENLSYPADLYLEGSDQYRGWFNSSLITSVAVNGHAPYKAILSQGFVLDGKGEKMSKSKGNIISPNDVAKQYGADILRLWVASVDTDNDVRVSMEILGQVSETYRKIRNTLRFLIANTSDFNPATDTVAYADLGAVDKYMTIVFNQLVATITDAYERYDFMAIYKAVVNFVTVDLSAFYLDFAKDVVYIEAANSLERRRMQTVFYDILVKITKLLTPILPHTTEEIWSYLEYESEAFVQLAEMPVAETFSAQEDILEAWSAFMTLRTQAQKALEEARNAKIIGKSLEAHLTIYASEEVKTLLTALDSDIALLLIVSQLTIADLADAPADAVAFEGIAFMVEHAIGEVCERSRRIDPTTRMRSYNAFVCDHSAKIIEENFPEAVAEGFEESGK.

The short motif at 57–67 (PYANGNIHVGH) is the 'HIGH' region element. Glutamate 554 lines the L-isoleucyl-5'-AMP pocket. The 'KMSKS' region signature appears at 595–599 (KMSKS). Lysine 598 contacts ATP.

It belongs to the class-I aminoacyl-tRNA synthetase family. IleS type 1 subfamily. As to quaternary structure, monomer.

Its subcellular location is the cytoplasm. It carries out the reaction tRNA(Ile) + L-isoleucine + ATP = L-isoleucyl-tRNA(Ile) + AMP + diphosphate. Its function is as follows. Catalyzes the attachment of isoleucine to tRNA(Ile). As IleRS can inadvertently accommodate and process structurally similar amino acids such as valine, to avoid such errors it has two additional distinct tRNA(Ile)-dependent editing activities. One activity is designated as 'pretransfer' editing and involves the hydrolysis of activated Val-AMP. The other activity is designated 'posttransfer' editing and involves deacylation of mischarged Val-tRNA(Ile). In Streptococcus pyogenes serotype M6 (strain ATCC BAA-946 / MGAS10394), this protein is Isoleucine--tRNA ligase.